The chain runs to 224 residues: Heme response regulator HssR (224 aa).

In terms of domain architecture, Response regulatory spans 3-116 (QCLVVDDDPR…ELIFRIRAVL (114 aa)). Aspartate 52 carries the post-translational modification 4-aspartylphosphate. A DNA-binding region (ompR/PhoB-type) is located at residues 124–222 (NSEMTIGNLT…VRGQGYKVEN (99 aa)).

Phosphorylated by HssS.

The protein resides in the cytoplasm. Member of the two-component regulatory system HssS/HssR involved in intracellular heme homeostasis and tempering of staphylococcal virulence. Phosphorylated HssR binds to a direct repeat sequence within hrtAB promoter and activates the expression of hrtAB, an efflux pump, in response to extracellular heme, hemin, hemoglobin or blood. The sequence is that of Heme response regulator HssR (hssR) from Staphylococcus aureus (strain MRSA252).